Here is a 409-residue protein sequence, read N- to C-terminus: Elongation factor Tu, chloroplastic (409 aa).

In terms of domain architecture, tr-type G spans 10-214 (KPHVNIGTIG…TVDAYIPTPE (205 aa)). Residues 19 to 26 (GHVDHGKT) are G1. 19-26 (GHVDHGKT) lines the GTP pocket. T26 is a binding site for Mg(2+). Positions 60-64 (GITIN) are G2. The interval 81–84 (DCPG) is G3. GTP is bound by residues 81–85 (DCPGH) and 136–139 (NKED). The G4 stretch occupies residues 136-139 (NKED). The interval 174–176 (SAL) is G5.

Belongs to the TRAFAC class translation factor GTPase superfamily. Classic translation factor GTPase family. EF-Tu/EF-1A subfamily.

It localises to the plastid. Its subcellular location is the chloroplast. The enzyme catalyses GTP + H2O = GDP + phosphate + H(+). Its function is as follows. GTP hydrolase that promotes the GTP-dependent binding of aminoacyl-tRNA to the A-site of ribosomes during protein biosynthesis. This chain is Elongation factor Tu, chloroplastic (tufA), found in Pleurastrum terricola (Filamentous green alga).